A 131-amino-acid chain; its full sequence is Small ribosomal subunit protein bS6 (131 aa).

A disordered region spans residues 99-131 (ASPMVKAKDERRERREDFATETNEDSDAGDSEE). Residues 104–116 (KAKDERRERREDF) show a composition bias toward basic and acidic residues. Over residues 120 to 131 (TNEDSDAGDSEE) the composition is skewed to acidic residues.

This sequence belongs to the bacterial ribosomal protein bS6 family.

Its function is as follows. Binds together with bS18 to 16S ribosomal RNA. The sequence is that of Small ribosomal subunit protein bS6 from Sodalis glossinidius (strain morsitans).